The primary structure comprises 247 residues: Probable transcriptional regulatory protein GM21_0933 (247 aa).

Belongs to the TACO1 family.

The protein localises to the cytoplasm. The protein is Probable transcriptional regulatory protein GM21_0933 of Geobacter sp. (strain M21).